The primary structure comprises 201 residues: Holliday junction branch migration complex subunit RuvA (201 aa).

The interval 1–64 (MYAYIRGKLT…EDAQLLYGFI (64 aa)) is domain I. Residues 65 to 143 (NEEEKDMFLS…ITRETTETLL (79 aa)) form a domain II region. The segment at 144 to 150 (SMNEENS) is flexible linker. A domain III region spans residues 151–201 (NSENLVKEALLALEALGYSKREISKVEKVLNKSTFDSVDEAVKLGLKTLVS).

The protein belongs to the RuvA family. In terms of assembly, homotetramer. Forms an RuvA(8)-RuvB(12)-Holliday junction (HJ) complex. HJ DNA is sandwiched between 2 RuvA tetramers; dsDNA enters through RuvA and exits via RuvB. An RuvB hexamer assembles on each DNA strand where it exits the tetramer. Each RuvB hexamer is contacted by two RuvA subunits (via domain III) on 2 adjacent RuvB subunits; this complex drives branch migration. In the full resolvosome a probable DNA-RuvA(4)-RuvB(12)-RuvC(2) complex forms which resolves the HJ.

Its subcellular location is the cytoplasm. The RuvA-RuvB-RuvC complex processes Holliday junction (HJ) DNA during genetic recombination and DNA repair, while the RuvA-RuvB complex plays an important role in the rescue of blocked DNA replication forks via replication fork reversal (RFR). RuvA specifically binds to HJ cruciform DNA, conferring on it an open structure. The RuvB hexamer acts as an ATP-dependent pump, pulling dsDNA into and through the RuvAB complex. HJ branch migration allows RuvC to scan DNA until it finds its consensus sequence, where it cleaves and resolves the cruciform DNA. This chain is Holliday junction branch migration complex subunit RuvA, found in Staphylococcus haemolyticus (strain JCSC1435).